A 41-amino-acid polypeptide reads, in one-letter code: Large ribosomal subunit protein bL36 (41 aa).

The protein belongs to the bacterial ribosomal protein bL36 family.

The chain is Large ribosomal subunit protein bL36 from Xanthomonas axonopodis pv. citri (strain 306).